A 489-amino-acid chain; its full sequence is Tandem C2 domains nuclear protein (489 aa).

Phosphoserine is present on residues serine 82, serine 155, serine 167, serine 173, and serine 210. The interval aspartate 189–isoleucine 214 is disordered. Residues phenylalanine 191–serine 210 show a composition bias toward low complexity. Residues threonine 213 and threonine 215 each carry the phosphothreonine modification. Phosphoserine is present on serine 217. 2 C2 domains span residues aspartate 222–isoleucine 341 and alanine 343–lysine 470. A Nuclear localization signal motif is present at residues arginine 446–lysine 448.

It localises to the nucleus. The sequence is that of Tandem C2 domains nuclear protein (Tc2n) from Mus musculus (Mouse).